We begin with the raw amino-acid sequence, 399 residues long: Argininosuccinate synthase (399 aa).

ATP is bound by residues alanine 10–serine 18 and alanine 38. Tyrosine 89 contacts L-citrulline. Glycine 119 is an ATP binding site. L-aspartate-binding residues include threonine 121, asparagine 125, and aspartate 126. Asparagine 125 contacts L-citrulline. 5 residues coordinate L-citrulline: arginine 129, serine 177, serine 186, glutamate 262, and tyrosine 274.

This sequence belongs to the argininosuccinate synthase family. Type 1 subfamily. As to quaternary structure, homotetramer.

The protein resides in the cytoplasm. The enzyme catalyses L-citrulline + L-aspartate + ATP = 2-(N(omega)-L-arginino)succinate + AMP + diphosphate + H(+). The protein operates within amino-acid biosynthesis; L-arginine biosynthesis; L-arginine from L-ornithine and carbamoyl phosphate: step 2/3. The chain is Argininosuccinate synthase from Acaryochloris marina (strain MBIC 11017).